The sequence spans 249 residues: 1-(5-phosphoribosyl)-5-[(5-phosphoribosylamino)methylideneamino] imidazole-4-carboxamide isomerase (249 aa).

The Proton acceptor role is filled by Asp8. The active-site Proton donor is the Asp129.

Belongs to the HisA/HisF family.

The protein resides in the cytoplasm. It carries out the reaction 1-(5-phospho-beta-D-ribosyl)-5-[(5-phospho-beta-D-ribosylamino)methylideneamino]imidazole-4-carboxamide = 5-[(5-phospho-1-deoxy-D-ribulos-1-ylimino)methylamino]-1-(5-phospho-beta-D-ribosyl)imidazole-4-carboxamide. It participates in amino-acid biosynthesis; L-histidine biosynthesis; L-histidine from 5-phospho-alpha-D-ribose 1-diphosphate: step 4/9. In Magnetococcus marinus (strain ATCC BAA-1437 / JCM 17883 / MC-1), this protein is 1-(5-phosphoribosyl)-5-[(5-phosphoribosylamino)methylideneamino] imidazole-4-carboxamide isomerase.